We begin with the raw amino-acid sequence, 341 residues long: Trace amine-associated receptor 13c (341 aa).

Residues 1–34 (MDLSSQEYDPSQFCFPAVNNSCLKGTHHVSTQTV) lie on the Extracellular side of the membrane. A glycan (N-linked (GlcNAc...) asparagine) is linked at asparagine 19. Disulfide bonds link cysteine 22/cysteine 186 and cysteine 105/cysteine 186. Residues 35–55 (VYLILASAMTVTVLGNSVVII) traverse the membrane as a helical segment. The Cytoplasmic segment spans residues 56–68 (SIAHFKQLQTPTN). The helical transmembrane segment at 69-89 (ILVMSLALADLLLGLVVMPFS) threads the bilayer. The Extracellular portion of the chain corresponds to 90–105 (MIRSVDGCWYYGETFC). The chain crosses the membrane as a helical span at residues 106 to 126 (LLHTGFDLFLTSVSIFHLIFI). Over 127-147 (AVDRHQAVCFPLQYPTRITIP) the chain is Cytoplasmic. The chain crosses the membrane as a helical span at residues 148–168 (VAWVMVMISWSMAAFYSYGVV). The Extracellular segment spans residues 169 to 195 (YSKANLEGLEEYIASVYCMGGCTLYFN). Residues 196 to 219 (ALWSVLDTLLTFFLPCSVMVGLYA) traverse the membrane as a helical segment. Residues 220–257 (RIFVVAKKHIKSITEANQNENENVFKNPRRSERKAAKT) lie on the Cytoplasmic side of the membrane. A helical membrane pass occupies residues 258–278 (LGIVVGAFILCWLPFFINSLV). Topologically, residues 279-292 (DPYINFSTPYALFD) are extracellular. Asparagine 283 carries N-linked (GlcNAc...) asparagine glycosylation. The helical transmembrane segment at 293-313 (AFGWLGYTNSTLNPIIYGLFY) threads the bilayer. At 314 to 341 (PWFRKTLSLIVTLRIFEPNSSDINLFTV) the chain is on the cytoplasmic side.

The protein belongs to the G-protein coupled receptor 1 family. In terms of tissue distribution, expressed in olfactory epithelium (at protein level). Detected in a sparse population of olfactory sensory neurons.

The protein localises to the cell membrane. Olfactory receptor for medium length odd-chained diamines including cadaverine which is generated by bacterial decarboxylation of the basic amino acid lysine and contributes to the odor of decomposing tissue. Mediates pronounced innate aversion behavior to cadaverine. The polypeptide is Trace amine-associated receptor 13c (Danio rerio (Zebrafish)).